The chain runs to 418 residues: MIFSSLFSVVGMAVLFLIAWVFSSNKRAINYRTIVSAFVIQVALGALALYVPLGREMLQGLASGIQSVISYGYEGVRFLFGNLAPNAKGDQGIGGFVFAINVLAIIIFFASLISLLYYLKIMPLFINLIGGALQKCLGTSRAESMSAAANIFVAHTEAPLVIKPYLKSMSDSEIFAVMCVGMASVAGPVLAGYASMGIPLPYLIAASFMSAPGGLLFAKIIYPQNETISSHADVSIEKHVNAIEAIANGASTGLNLALHVGAMLLAFVGMLALINGLLGVVGGFLGMEHLSLGLILGTLLKPLAFMLGIPWSQAGIAGEIIGIKIALNEFVGYMQLLPYLGDNPPLILSEKTKAIITFALCGFANLSSVAMLIGGLGSLVPKKKDLIVRLALKAVLVGTLSNFMSATIAGLFIGLNAH.

Transmembrane regions (helical) follow at residues 2–22, 34–54, 93–113, 174–194, 198–218, 264–284, 292–314, 354–374, and 395–415; these read IFSS…AWVF, IVSA…VPLG, IGGF…ASLI, IFAV…AGYA, IPLP…LLFA, LLAF…VGGF, LGLI…WSQA, AIIT…MLIG, and VLVG…FIGL.

Belongs to the concentrative nucleoside transporter (CNT) (TC 2.A.41) family.

Its subcellular location is the cell inner membrane. Functionally, involved in purine nucleosides uptake. Could also be involved in uptake of nucleobases. The sequence is that of Nucleoside permease NupC from Helicobacter pylori (strain ATCC 700392 / 26695) (Campylobacter pylori).